Reading from the N-terminus, the 65-residue chain is Small ribosomal subunit protein eS31 (65 aa).

Zn(2+)-binding residues include Cys-36, Cys-39, Cys-55, and Cys-58. The C4-type zinc finger occupies 36 to 58; sequence CPKCGSVMAFHKEPVPRWHCGKC.

Belongs to the eukaryotic ribosomal protein eS31 family. As to quaternary structure, part of the 30S ribosomal subunit. Zn(2+) is required as a cofactor.

This is Small ribosomal subunit protein eS31 from Pyrobaculum aerophilum (strain ATCC 51768 / DSM 7523 / JCM 9630 / CIP 104966 / NBRC 100827 / IM2).